The sequence spans 310 residues: tRNA pseudouridine synthase B (310 aa).

Residue D49 is the Nucleophile of the active site.

This sequence belongs to the pseudouridine synthase TruB family. Type 1 subfamily.

It catalyses the reaction uridine(55) in tRNA = pseudouridine(55) in tRNA. Its function is as follows. Responsible for synthesis of pseudouridine from uracil-55 in the psi GC loop of transfer RNAs. This Idiomarina loihiensis (strain ATCC BAA-735 / DSM 15497 / L2-TR) protein is tRNA pseudouridine synthase B.